The following is a 123-amino-acid chain: Large ribosomal subunit protein uL14 (123 aa).

Belongs to the universal ribosomal protein uL14 family. In terms of assembly, part of the 50S ribosomal subunit. Forms a cluster with proteins L3 and L19. In the 70S ribosome, L14 and L19 interact and together make contacts with the 16S rRNA in bridges B5 and B8.

Its function is as follows. Binds to 23S rRNA. Forms part of two intersubunit bridges in the 70S ribosome. This is Large ribosomal subunit protein uL14 from Sodalis glossinidius (strain morsitans).